The following is a 520-amino-acid chain: Glutamate--cysteine ligase (520 aa).

It belongs to the glutamate--cysteine ligase type 1 family. Type 1 subfamily.

The enzyme catalyses L-cysteine + L-glutamate + ATP = gamma-L-glutamyl-L-cysteine + ADP + phosphate + H(+). It functions in the pathway sulfur metabolism; glutathione biosynthesis; glutathione from L-cysteine and L-glutamate: step 1/2. The chain is Glutamate--cysteine ligase from Leptospira interrogans serogroup Icterohaemorrhagiae serovar Lai (strain 56601).